Reading from the N-terminus, the 175-residue chain is Two-on-two hemoglobin-3 (175 aa).

Heme is bound by residues Y85 and H98. The tract at residues 153–175 (QNEKPKHKPQCACKHAANKPAEE) is disordered.

It belongs to the truncated hemoglobin family. Group II subfamily. In terms of assembly, homodimer when ferric. Interacts with RGLG3 and RGLG4. Heme is required as a cofactor. In terms of tissue distribution, expressed ubiquitously, with higher levels in root tissue than in shoot tissue.

Its function is as follows. Hemoglobin-like protein that exhibits an unusual concentration-independent binding of O(2) and CO. May promote shoot organogenesis from root explants in vitro. Inhibits RGLG3 and RGLG4 ubiquitination activity. This Arabidopsis thaliana (Mouse-ear cress) protein is Two-on-two hemoglobin-3 (GLB3).